We begin with the raw amino-acid sequence, 604 residues long: ERAD-associated E3 ubiquitin-protein ligase component HRD3B (604 aa).

The N-terminal stretch at 1-25 (MRVSGQSIIAISLFTLSLYIHRVQA) is a signal peptide. A disordered region spans residues 48-69 (ESSDFDEFGESEPKSEEELDPG). N-linked (GlcNAc...) asparagine glycans are attached at residues asparagine 78 and asparagine 105. Sel1-like repeat units follow at residues 125 to 160 (PHAQSVMGFVYGIGMMRETSRSKSILHHHFAAAGGN), 244 to 274 (VAMHKIGLFYYFGLRGLRRDHAKALYWFSKA), 279 to 307 (LGYLYVKGYGVDKRNYTKAREYFEMAANN), 311 to 344 (SGHYNLGVLYLKGTGVKKDVRHATKYFFVAANAG), 346 to 380 (PKAFYQLAKMFHTGVGLTKNLEMATTFYKLVAERG), 464 to 492 (AALLIGDAYYYGRGTERDFVRAAEAYMYA), and 498 to 528 (AQAMFNLGYMHEHGEGLPFDLHLAKRYYDQA). Asparagine 293 carries an N-linked (GlcNAc...) asparagine glycan.

This sequence belongs to the sel-1 family.

May be involved in the endoplasmic reticulum (ER) quality control system called ER-associated degradation (ERAD). The sequence is that of ERAD-associated E3 ubiquitin-protein ligase component HRD3B from Arabidopsis thaliana (Mouse-ear cress).